Here is a 237-residue protein sequence, read N- to C-terminus: Tetraspanin-8 (237 aa).

Topologically, residues 1–9 (MAGVSACIK) are cytoplasmic. A helical membrane pass occupies residues 10-33 (YSMFTFNFLFWLCGILILALAIWV). Residues 34-57 (RVSNDSQAIFGSEDVGSSSYVAVD) are Extracellular-facing. Residues 58-72 (ILIAVGAIIMILGFL) form a helical membrane-spanning segment. The Cytoplasmic portion of the chain corresponds to 73 to 83 (GCCGAIKESRC). Residues 84–109 (MLLLFFIGLLLILLLQVATGILGAVF) traverse the membrane as a helical segment. Residues 110-205 (KSKSDRIVNE…SFIKDFLAKN (96 aa)) are Extracellular-facing. A glycan (N-linked (GlcNAc...) asparagine) is linked at Asn118. The chain crosses the membrane as a helical span at residues 206 to 230 (LIIVIGISFGLAVIEILGLVFSMVL). Residues 231–237 (YCQIGNK) are Cytoplasmic-facing.

The protein belongs to the tetraspanin (TM4SF) family. As to quaternary structure, forms homooligomers. Interacts with MEP1B. Interacts with integrin alpha3/ITGA3. Interacts with RICTOR and MTOR. Interacts with ADAM17. Interacts with ECE1. In terms of tissue distribution, gastric, colon, rectal, and pancreatic carcinomas.

It localises to the cell membrane. In terms of biological role, structural component of specialized membrane microdomains known as tetraspanin-enriched microdomains (TERMs), which act as platforms for receptor clustering and signaling. Participates thereby in diverse biological functions such as cell signal transduction, migration and protein trafficking. Promotes ADAM17-mediated TNF-alpha processing through recruitment of ADAM17 to tetraspanin-enriched micro-domains (TEMs). Forms a complex with RICTOR and integrin alpha3/ITGA3 to mediate mTORC2 activation and AKT1 phosphorylation leading to cell migration. Reduces apoptosis and autophagy induced by high glucose levels through forming a complex with mTOR and RICTOR. Contributes to the maintenance of intestinal epithelial barrier and plays a role in the regulation of intestine inflammation by switching interferon gamma receptor 1/IFNGR1 from clathrin-dependent to lipid raft-dependent endocytosis route to limit STAT1 activation magnitude and duration. Acts as a modulator of the endothelin axis by associating with endothelin converting enzyme ECE1 and regulating its activity of conversion of the endothelin-1 precursor to endothelin. The protein is Tetraspanin-8 (TSPAN8) of Homo sapiens (Human).